Here is a 733-residue protein sequence, read N- to C-terminus: Ferric aerobactin receptor (733 aa).

The N-terminal stretch at 1-25 (MMISKKYTLWALNPLLLTMMAPAVA) is a signal peptide. The TonB box motif lies at 31–38 (ETFVVSAN). Residues 43–153 (TVAEMAQTTW…TGGLINIVTK (111 aa)) form the TBDR plug domain. Positions 158–733 (ETIMEFEAGT…TFGLNYSVLF (576 aa)) constitute a TBDR beta-barrel domain. The TonB C-terminal box signature appears at 716-733 (YDYKGRGRTFGLNYSVLF).

It belongs to the TonB-dependent receptor family.

It localises to the cell outer membrane. Its function is as follows. Receptor for aerobactin. This chain is Ferric aerobactin receptor (iutA), found in Klebsiella pneumoniae.